The following is a 424-amino-acid chain: MVMFSQDHVQIVYGSTRICKSLAPANKRKTHRTIVVAPRRGFLRIPPDGQDVNHVKIVPTTSSSLAPPRDDERRPTPPLRPPLTVYPYGTSLIRRSARDAKLRSKLIVFHITRPALGQHPQNPGISGPAAMDHSEFLTSFRREVDRQTVLTAESAPATAEVCLGDALPGGVMGGGGLPAGVGSASAAVAAAAAAVAGVPVAANPVMPATATVTTPPMIDLTSHHRPLTLFTPASAAAAPAVATNGGNATYILPADCRYAPLFASKYKYVFEEVSRLMRLHDSTAVQLQISASCGNAFQALKSALLKLHNVTVLAGQQLITQTMPHTPQAVATFKFFHQDPNRVLDCIRPVVPRSTSYHETGVYQMWVSGATKKDLFDAVTLCASIVEKQPDVFNINVSLLTYPSIAAPHLPLYNEFTSFRLPTS.

Positions 57 to 82 are disordered; the sequence is IVPTTSSSLAPPRDDERRPTPPLRPP.

This sequence belongs to the herpesviridae U84 family.

It localises to the host nucleus. Functionally, plays a role in the inhibition of host DNA replication in the infected cell. Targets the mini-chromosome maintenance (MCM) complex and blocks the accumulation of MCM proteins and their loading onto host chromatin. This chain is Protein UL117 (UL117), found in Human cytomegalovirus (strain AD169) (HHV-5).